A 484-amino-acid chain; its full sequence is Transcription factor cghD (484 aa).

The zn(2)-C6 fungal-type DNA-binding region spans 21-54 (CDRCRLQKLKCTVQSMESDGRMVCERCVRAKVPC). Disordered regions lie at residues 59 to 117 (RRRA…PTLA), 136 to 174 (TTAP…SGSS), 202 to 242 (PAST…FSTT), and 386 to 406 (HMHS…ELPS). The segment covering 64-76 (RPSDTKKQGDSST) has biased composition (basic and acidic residues). The span at 77–107 (RRSTAPRTTNPEPTVLTPPLSTTSSTSEQTL) shows a compositional bias: low complexity. A compositionally biased stretch (low complexity) spans 202–213 (PASTSTSTGSPT).

The protein localises to the nucleus. Transcription factor that regulates the expression of the gene cluster that mediates the biosynthesis of the tetramic acid Sch210972, a potential anti-HIV fungal natural product that contains a decalin core. The chain is Transcription factor cghD from Chaetomium globosum (strain ATCC 6205 / CBS 148.51 / DSM 1962 / NBRC 6347 / NRRL 1970) (Soil fungus).